Consider the following 116-residue polypeptide: Protein Rev (116 aa).

Residues Ser-5 and Ser-8 each carry the phosphoserine; by host CK2 modification. A homomultimerization region spans residues 18–26; the sequence is LIKILYQSN. Positions 26–50 are disordered; it reads NPYPKPNGSRQARRNRRRRWRARQN. The Nuclear localization signal and RNA-binding (RRE) signature appears at 34–50; sequence SRQARRNRRRRWRARQN. Residues 36 to 47 show a composition bias toward basic residues; the sequence is QARRNRRRRWRA. Residues 73-84 carry the Nuclear export signal and binding to XPO1 motif; sequence LQLPPIERLRLD. The segment at 91 to 116 is disordered; sequence NSGTQGVGDPQISGEPCMVLGAGTKE. Ser-92 is subject to Phosphoserine; by host.

This sequence belongs to the HIV-1 REV protein family. In terms of assembly, homomultimer; when bound to the RRE. Multimeric assembly is essential for activity and may involve XPO1. Binds to human KPNB1, XPO1, TNPO1, RANBP5 and IPO7. Interacts with the viral Integrase. Interacts with human KHDRBS1. Interacts with human NAP1; this interaction decreases Rev multimerization and stimulates its activity. Interacts with human DEAD-box helicases DDX3 and DDX24; these interactions may serve for viral RNA export to the cytoplasm and packaging, respectively. Interacts with human PSIP1; this interaction may inhibit HIV-1 DNA integration by promoting dissociation of the Integrase-LEDGF/p75 complex. Post-translationally, asymmetrically arginine dimethylated at one site by host PRMT6. Methylation impairs the RNA-binding activity and export of viral RNA from the nucleus to the cytoplasm. Phosphorylated by protein kinase CK2. Presence of, and maybe binding to the N-terminus of the regulatory beta subunit of CK2 is necessary for CK2-mediated Rev's phosphorylation.

It localises to the host nucleus. Its subcellular location is the host nucleolus. The protein resides in the host cytoplasm. Functionally, escorts unspliced or incompletely spliced viral pre-mRNAs (late transcripts) out of the nucleus of infected cells. These pre-mRNAs carry a recognition sequence called Rev responsive element (RRE) located in the env gene, that is not present in fully spliced viral mRNAs (early transcripts). This function is essential since most viral proteins are translated from unspliced or partially spliced pre-mRNAs which cannot exit the nucleus by the pathway used by fully processed cellular mRNAs. Rev itself is translated from a fully spliced mRNA that readily exits the nucleus. Rev's nuclear localization signal (NLS) binds directly to KPNB1/Importin beta-1 without previous binding to KPNA1/Importin alpha-1. KPNB1 binds to the GDP bound form of RAN (Ran-GDP) and targets Rev to the nucleus. In the nucleus, the conversion from Ran-GDP to Ran-GTP dissociates Rev from KPNB1 and allows Rev's binding to the RRE in viral pre-mRNAs. Rev multimerization on the RRE via cooperative assembly exposes its nuclear export signal (NES) to the surface. Rev can then form a complex with XPO1/CRM1 and Ran-GTP, leading to nuclear export of the complex. Conversion from Ran-GTP to Ran-GDP mediates dissociation of the Rev/RRE/XPO1/RAN complex, so that Rev can return to the nucleus for a subsequent round of export. Beside KPNB1, also seems to interact with TNPO1/Transportin-1, RANBP5/IPO5 and IPO7/RANBP7 for nuclear import. The nucleoporin-like HRB/RIP is an essential cofactor that probably indirectly interacts with Rev to release HIV RNAs from the perinuclear region to the cytoplasm. This chain is Protein Rev, found in Homo sapiens (Human).